We begin with the raw amino-acid sequence, 364 residues long: Aminomethyltransferase (364 aa).

The protein belongs to the GcvT family. As to quaternary structure, the glycine cleavage system is composed of four proteins: P, T, L and H.

It catalyses the reaction N(6)-[(R)-S(8)-aminomethyldihydrolipoyl]-L-lysyl-[protein] + (6S)-5,6,7,8-tetrahydrofolate = N(6)-[(R)-dihydrolipoyl]-L-lysyl-[protein] + (6R)-5,10-methylene-5,6,7,8-tetrahydrofolate + NH4(+). Functionally, the glycine cleavage system catalyzes the degradation of glycine. The polypeptide is Aminomethyltransferase (Shigella boydii serotype 18 (strain CDC 3083-94 / BS512)).